Here is a 384-residue protein sequence, read N- to C-terminus: MAVLTESELIQIRRHLHEIPELALQEKETHDYLLKIIKGFNSEFLTIKVPEELPTAILVLIKGSNPQRTIGYRTDIDALPVEEKTNLPFSSTHPGIMHACGHDIHMSVALGLLSYFSENQPKDNLLFFFQPAEESESGGKKAYEDGIFEGKFRPDEFYGLHDNPELPAGAIGCREGTLFAGTTEVNIDLIGKGGHAAFPQNANDTVVAAASLIMQIQTVISRSIDPIQSGVITLGKVRAGTIRNVIAGQTRIEGTIRGLTQKMILQIDQRLQDLCEGIARSYNMKVNLELNQGGYWPVENNPELTKNFISYMKNNPEVDFVETKPKMTGEDFGFLLAKFPGTMFWLGVGDPDSQLHSANLNPDEKSIIRGVNAIKGFLINRMGI.

Residue aspartate 75 is part of the active site. The Proton acceptor role is filled by glutamate 134.

This sequence belongs to the peptidase M20A family. N-acetyldiaminopimelate deacetylase subfamily.

It catalyses the reaction N-acetyl-(2S,6S)-2,6-diaminopimelate + H2O = (2S,6S)-2,6-diaminopimelate + acetate. It functions in the pathway amino-acid biosynthesis; L-lysine biosynthesis via DAP pathway; LL-2,6-diaminopimelate from (S)-tetrahydrodipicolinate (acetylase route): step 3/3. Its function is as follows. Catalyzes the conversion of N-acetyl-diaminopimelate to diaminopimelate and acetate. This Lactobacillus helveticus (strain DPC 4571) protein is N-acetyldiaminopimelate deacetylase.